Consider the following 709-residue polypeptide: Putative extracellular sulfatase Sulf-1 homolog (709 aa).

The signal sequence occupies residues 1-27 (MISNLRISNYFIIFYVLFLIIPIKVTS). D43, D44, and C79 together coordinate Ca(2+). The Nucleophile role is filled by C79. At C79 the chain carries 3-oxoalanine (Cys). N103, N162, and N189 each carry an N-linked (GlcNAc...) asparagine glycan. Ca(2+) contacts are provided by D308 and H309. Residues N344, N468, N500, N540, N566, N610, and N620 are each glycosylated (N-linked (GlcNAc...) asparagine).

Belongs to the sulfatase family. It depends on Ca(2+) as a cofactor. The conversion to 3-oxoalanine (also known as C-formylglycine, FGly), of a serine or cysteine residue in prokaryotes and of a cysteine residue in eukaryotes, is critical for catalytic activity.

The protein localises to the endoplasmic reticulum. The protein resides in the golgi apparatus. It is found in the golgi stack. Its subcellular location is the cell surface. In Caenorhabditis elegans, this protein is Putative extracellular sulfatase Sulf-1 homolog (sul-1).